The chain runs to 437 residues: Inactive peptidyl-prolyl cis-trans isomerase shutdown (437 aa).

Residues 92–178 (DSEVTIHYAA…RPEPALFVIV (87 aa)) form the PPIase FKBP-type domain. TPR repeat units lie at residues 209-242 (VNALRADAKELYKKKKYVKAIKNYQQAISVLRLS), 258-294 (VNAYLNLAVCYYKTNKPKHVLNMCECLDRLIDTEKHC), and 295-327 (KALYYYGKAHEMLGKTEMAIKYYKKALKLEPKN).

It belongs to the FKBP6 family. As to quaternary structure, interacts with Hsp83.

It is found in the cytoplasm. In terms of biological role, co-chaperone required during oogenesis to repress transposable elements and prevent their mobilization, which is essential for the germline integrity. Acts via the piRNA metabolic process, which mediates the repression of transposable elements during meiosis by forming complexes composed of piRNAs and Piwi proteins and govern the methylation and subsequent repression of transposons. Acts as a co-chaperone via its interaction with Hsp83/HSP90 and is required for the biogenesis of all three piRNA major populations. The sequence is that of Inactive peptidyl-prolyl cis-trans isomerase shutdown (shu) from Bombyx mori (Silk moth).